The chain runs to 434 residues: Glucose-6-phosphate 1-dehydrogenase (434 aa).

NADP(+)-binding positions include 7 to 14 (GSSGDLAK), Arg36, Tyr93, and Lys112. Residues Lys112, 137–141 (HYLLK), Glu175, and Asp193 each bind D-glucose 6-phosphate. His198 functions as the Proton acceptor in the catalytic mechanism. D-glucose 6-phosphate is bound by residues Lys280 and Lys285. Arg286 contributes to the NADP(+) binding site.

It belongs to the glucose-6-phosphate dehydrogenase family.

It catalyses the reaction D-glucose 6-phosphate + NADP(+) = 6-phospho-D-glucono-1,5-lactone + NADPH + H(+). Its pathway is carbohydrate degradation; pentose phosphate pathway; D-ribulose 5-phosphate from D-glucose 6-phosphate (oxidative stage): step 1/3. In terms of biological role, catalyzes the rate-limiting step of the oxidative pentose-phosphate pathway, which represents a route for the dissimilation of carbohydrates besides glycolysis. The main function of this enzyme is to provide reducing power (NADPH) and pentose phosphates for fatty acid and nucleic acid synthesis. In Encephalitozoon cuniculi (strain GB-M1) (Microsporidian parasite), this protein is Glucose-6-phosphate 1-dehydrogenase (ZWF1).